We begin with the raw amino-acid sequence, 153 residues long: MSHPIYELPIDVNQIQTLIPHRYPFLLIDRVIELDLEAKRIVGQKNVTINEPFFQGHFPTRPVMPGVLIIEALAQAGGVMTQLGLGRDALSKLFYMVKVDNARFNKQVVPGDVLILEVQMKRLIRNMGCYYGEAKVNGEIVASAEVMCAGARE.

His-57 is a catalytic residue.

Belongs to the thioester dehydratase family. FabZ subfamily.

Its subcellular location is the cytoplasm. It carries out the reaction a (3R)-hydroxyacyl-[ACP] = a (2E)-enoyl-[ACP] + H2O. Its function is as follows. Involved in unsaturated fatty acids biosynthesis. Catalyzes the dehydration of short chain beta-hydroxyacyl-ACPs and long chain saturated and unsaturated beta-hydroxyacyl-ACPs. This Xanthomonas campestris pv. campestris (strain 8004) protein is 3-hydroxyacyl-[acyl-carrier-protein] dehydratase FabZ.